A 197-amino-acid polypeptide reads, in one-letter code: Small ribosomal subunit protein uS4c (197 aa).

Residues 82-143 form the S4 RNA-binding domain; it reads MRLDNILFRL…KQRSKALIQN (62 aa).

The protein belongs to the universal ribosomal protein uS4 family. Part of the 30S ribosomal subunit. Contacts protein S5. The interaction surface between S4 and S5 is involved in control of translational fidelity.

It is found in the plastid. Its subcellular location is the chloroplast. Functionally, one of the primary rRNA binding proteins, it binds directly to 16S rRNA where it nucleates assembly of the body of the 30S subunit. In terms of biological role, with S5 and S12 plays an important role in translational accuracy. This chain is Small ribosomal subunit protein uS4c (rps4), found in Gladiolus papilio (Goldblotch gladiolus).